The primary structure comprises 48 residues: Large ribosomal subunit protein bL33A (48 aa).

This sequence belongs to the bacterial ribosomal protein bL33 family.

The chain is Large ribosomal subunit protein bL33A from Limosilactobacillus fermentum (strain NBRC 3956 / LMG 18251) (Lactobacillus fermentum).